A 268-amino-acid polypeptide reads, in one-letter code: Exopolysaccharide production negative regulator (268 aa).

The first 22 residues, 1–22 (MRAGELKSLRVAVLGMSLAVGA), serve as a signal peptide directing secretion.

Functionally, negatively modulates exopolysaccharide (EPS) biosynthesis. This is Exopolysaccharide production negative regulator (exoR) from Rhizobium meliloti (strain 1021) (Ensifer meliloti).